The chain runs to 293 residues: Formamidopyrimidine-DNA glycosylase (293 aa).

Proline 2 (schiff-base intermediate with DNA) is an active-site residue. Glutamate 3 (proton donor) is an active-site residue. Residue lysine 60 is the Proton donor; for beta-elimination activity of the active site. Histidine 110, arginine 129, and arginine 174 together coordinate DNA. The FPG-type zinc-finger motif lies at asparagine 259–lysine 293. The active-site Proton donor; for delta-elimination activity is arginine 283.

This sequence belongs to the FPG family. In terms of assembly, monomer. Zn(2+) serves as cofactor.

The catalysed reaction is Hydrolysis of DNA containing ring-opened 7-methylguanine residues, releasing 2,6-diamino-4-hydroxy-5-(N-methyl)formamidopyrimidine.. It carries out the reaction 2'-deoxyribonucleotide-(2'-deoxyribose 5'-phosphate)-2'-deoxyribonucleotide-DNA = a 3'-end 2'-deoxyribonucleotide-(2,3-dehydro-2,3-deoxyribose 5'-phosphate)-DNA + a 5'-end 5'-phospho-2'-deoxyribonucleoside-DNA + H(+). Functionally, involved in base excision repair of DNA damaged by oxidation or by mutagenic agents. Acts as a DNA glycosylase that recognizes and removes damaged bases. Has a preference for oxidized purines, such as 7,8-dihydro-8-oxoguanine (8-oxoG). Has AP (apurinic/apyrimidinic) lyase activity and introduces nicks in the DNA strand. Cleaves the DNA backbone by beta-delta elimination to generate a single-strand break at the site of the removed base with both 3'- and 5'-phosphates. This is Formamidopyrimidine-DNA glycosylase from Prochlorococcus marinus (strain MIT 9312).